The chain runs to 280 residues: 2-dehydro-3-deoxyphosphooctonate aldolase (280 aa).

It belongs to the KdsA family.

The protein resides in the cytoplasm. The enzyme catalyses D-arabinose 5-phosphate + phosphoenolpyruvate + H2O = 3-deoxy-alpha-D-manno-2-octulosonate-8-phosphate + phosphate. It functions in the pathway carbohydrate biosynthesis; 3-deoxy-D-manno-octulosonate biosynthesis; 3-deoxy-D-manno-octulosonate from D-ribulose 5-phosphate: step 2/3. The protein operates within bacterial outer membrane biogenesis; lipopolysaccharide biosynthesis. The polypeptide is 2-dehydro-3-deoxyphosphooctonate aldolase (Pseudomonas putida (strain W619)).